Consider the following 153-residue polypeptide: MKFSTIFGATTVMTAVSAAAVSSVMTTKTITATNGNNVYTKVVTDTADPIISYSTTRTVVVSNSDATYTKVVTEGPDTTSEKSTTKTLTLTNGSGSSTNLYTKTVTQAVESSTSSSSSSSSSSSSASSSGAAPAAFQGASVGALALGLISYLL.

Residues 1–18 (MKFSTIFGATTVMTAVSA) form the signal peptide. The segment at 73-98 (TEGPDTTSEKSTTKTLTLTNGSGSST) is disordered. A compositionally biased stretch (low complexity) spans 85–98 (TKTLTLTNGSGSST). N-linked (GlcNAc...) asparagine glycosylation is present at Asn92. The GPI-anchor amidated glycine moiety is linked to residue Gly130. A propeptide spans 131–153 (AAPAAFQGASVGALALGLISYLL) (removed in mature form).

In terms of processing, the GPI-anchor is attached to the protein in the endoplasmic reticulum and serves to target the protein to the cell surface. There, the glucosamine-inositol phospholipid moiety is cleaved off and the GPI-modified mannoprotein is covalently attached via its lipidless GPI glycan remnant to the 1,6-beta-glucan of the outer cell wall layer.

The protein resides in the secreted. Its subcellular location is the cell wall. It is found in the membrane. In terms of biological role, involved in the uptake of non-siderophore and siderophore sources of iron. Has a role in the retention of iron in the cell wall and periplasmic space. This chain is Facilitator of iron transport 2 (FIT2), found in Saccharomyces cerevisiae (strain ATCC 204508 / S288c) (Baker's yeast).